The primary structure comprises 495 residues: Cytochrome P450 monooxygenase BOA4 (495 aa).

Residues 12–31 (LANSNTVIAGCIVFALYYLF) traverse the membrane as a helical segment. Asn-115 carries N-linked (GlcNAc...) asparagine glycosylation. Cys-439 is a heme binding site.

It belongs to the cytochrome P450 family. Heme is required as a cofactor.

It localises to the membrane. The protein operates within polyketide biosynthesis. Cytochrome P450 monooxygenase; part of the gene cluster A that mediates the biosynthesis of botcinic acid and its botcinin derivatives, acetate-derived polyketides that contribute to virulence when combined with the sesquiterpene botrydial. Botcinic acid and its derivatives have been shown to induce chlorosis and necrosis during host plant infection, but also have antifungal activities. Two polyketide synthases, BOA6 and BOA9, are involved in the biosynthesis of botcinins. BOA6 mediates the formation of the per-methylated tetraketide core by condensation of four units of malonyl-CoA with one unit of acetyl-CoA, which would be methylated in activated methylene groups to yield a bicyclic acid intermediate that could then either be converted to botrylactone derivatives or lose the starter acetate unit through a retro-Claisen type C-C bond cleavage to yield botcinin derivatives. The second polyketide synthase, BOA9, is probably required for the biosynthesis of the tetraketide side chain of botcinins. The methyltransferase (MT) domain within BOA6 is probably responsible for the incorporation of four methyl groups. The trans-enoyl reductase BOA5 might take over the enoyl reductase function of BOA6 that misses an ER domain. The monooxygenases BOA2, BOA3 and BOA4 might be involved in further hydroxylations at C4, C5 and C8, whereas BOA7, close to BOA9, could potentially be involved in the hydroxylation at C4 in the side chain of botcinins. This Botryotinia fuckeliana (strain B05.10) (Noble rot fungus) protein is Cytochrome P450 monooxygenase BOA4.